Here is a 395-residue protein sequence, read N- to C-terminus: F-box/kelch-repeat protein SKIP25 (395 aa).

The tract at residues 1–29 is disordered; sequence MEKKLKRRESMSTTAAESPPAKRRRTVTG. Positions 34 to 79 constitute an F-box domain; it reads ALIEGLPDHISEICLSLVHRPSLLSAVCTRWRRLLYSPEFPSFPSL. Kelch repeat units lie at residues 81–129, 147–194, 196–245, 246–299, and 301–342; these read ALFV…YRHP, LILI…ACDG, IYIA…FSRE, AIDA…AMEE, and ILYS…TQVT.

In terms of assembly, part of a SCF (ASK-cullin-F-box) protein ligase complex. Interacts with SKP1A/ASK1.

The protein resides in the nucleus. Its pathway is protein modification; protein ubiquitination. In terms of biological role, component of SCF(ASK-cullin-F-box) E3 ubiquitin ligase complexes, which may mediate the ubiquitination and subsequent proteasomal degradation of target proteins. This is F-box/kelch-repeat protein SKIP25 (SKIP25) from Arabidopsis thaliana (Mouse-ear cress).